We begin with the raw amino-acid sequence, 208 residues long: MSAGGDFGNPLRKFKLVFLGEQSVGKTSLITRFMYDSFDNTYQATIGIDFLSKTMYLEDRTIRLQLWDTAGQERFRSLIPSYIRDSAAAVVVYDITNVNSFQQTTKWIDDVRTERGSDVIIMLVGNKTDLADKRQVSIEEGERKAKELNVMFIETSAKAGYNVKQLFRRVAAALPGMESTQDKSREDMIDIKLEKPQEQPVSEGGCSC.

The residue at position 2 (Ser-2) is an N-acetylserine. Ser-23, Val-24, Gly-25, Lys-26, Thr-27, Ser-28, Asp-39, Asn-40, Tyr-42, and Thr-45 together coordinate GTP. Position 27 (Thr-27) interacts with Mg(2+). Residues 32–50 (RFMYDSFDNTYQATIGIDF) carry the Switch 1 motif. 2 residues coordinate Mg(2+): Thr-45 and Asp-68. The short motif at 69 to 88 (TAGQERFRSLIPSYIRDSAA) is the Switch 2 element. GTP is bound by residues Gly-71, Asn-126, Lys-127, Asp-129, Ser-156, Ala-157, and Lys-158. 2 S-geranylgeranyl cysteine lipidation sites follow: Cys-206 and Cys-208. A Cysteine methyl ester modification is found at Cys-208.

This sequence belongs to the small GTPase superfamily. Rab family. Mg(2+) is required as a cofactor.

The protein resides in the golgi apparatus membrane. It carries out the reaction GTP + H2O = GDP + phosphate + H(+). Regulated by guanine nucleotide exchange factors (GEFs) which promote the exchange of bound GDP for free GTP. Regulated by GTPase activating proteins (GAPs) which increase the GTP hydrolysis activity. Inhibited by GDP dissociation inhibitors (GDIs). The small GTPases Rab are key regulators of intracellular membrane trafficking, from the formation of transport vesicles to their fusion with membranes. Rabs cycle between an inactive GDP-bound form and an active GTP-bound form that is able to recruit to membranes different sets of downstream effectors directly responsible for vesicle formation, movement, tethering and fusion. RAB6A acts as a regulator of COPI-independent retrograde transport from the Golgi apparatus towards the endoplasmic reticulum (ER). The sequence is that of Ras-related protein Rab-6A (RAB6A) from Gallus gallus (Chicken).